The primary structure comprises 156 residues: Ribosomal RNA large subunit methyltransferase H (156 aa).

Residues leucine 73, glycine 104, and 123–128 contribute to the S-adenosyl-L-methionine site; that span reads ISSMTL.

It belongs to the RNA methyltransferase RlmH family. In terms of assembly, homodimer.

It localises to the cytoplasm. The catalysed reaction is pseudouridine(1915) in 23S rRNA + S-adenosyl-L-methionine = N(3)-methylpseudouridine(1915) in 23S rRNA + S-adenosyl-L-homocysteine + H(+). In terms of biological role, specifically methylates the pseudouridine at position 1915 (m3Psi1915) in 23S rRNA. In Burkholderia lata (strain ATCC 17760 / DSM 23089 / LMG 22485 / NCIMB 9086 / R18194 / 383), this protein is Ribosomal RNA large subunit methyltransferase H.